Here is a 176-residue protein sequence, read N- to C-terminus: Adenine phosphoribosyltransferase (176 aa).

It belongs to the purine/pyrimidine phosphoribosyltransferase family. Homodimer.

Its subcellular location is the cytoplasm. The enzyme catalyses AMP + diphosphate = 5-phospho-alpha-D-ribose 1-diphosphate + adenine. Its pathway is purine metabolism; AMP biosynthesis via salvage pathway; AMP from adenine: step 1/1. Functionally, catalyzes a salvage reaction resulting in the formation of AMP, that is energically less costly than de novo synthesis. This Methylobacillus flagellatus (strain ATCC 51484 / DSM 6875 / VKM B-1610 / KT) protein is Adenine phosphoribosyltransferase.